Reading from the N-terminus, the 727-residue chain is NADH-ubiquinone oxidoreductase 75 kDa subunit, mitochondrial (727 aa).

The N-terminal 23 residues, 1–23, are a transit peptide targeting the mitochondrion; the sequence is MLRIPVRKALVGLSKSPKGCVRT. One can recognise a 2Fe-2S ferredoxin-type domain in the interval 30–108; it reads NLIEVFVDGQ…GWNILTNSEK (79 aa). Residues cysteine 64, cysteine 75, and cysteine 78 each contribute to the [2Fe-2S] cluster site. Position 84 is an N6-acetyllysine (lysine 84). Cysteine 92 is a [2Fe-2S] cluster binding site. Positions 108–147 constitute a 4Fe-4S His(Cys)3-ligated-type domain; it reads KSKKAREGVMEFLLANHPLDCPICDQGGECDLQDQSMMFG. [4Fe-4S] cluster-binding residues include histidine 124, cysteine 128, cysteine 131, cysteine 137, cysteine 176, cysteine 179, cysteine 182, and cysteine 226. A 4Fe-4S Mo/W bis-MGD-type domain is found at 245 to 301; sequence TRKTESIDVMDAVGSNIVVSTRTGEVMRILPRMHEDINEXWISDKTRFAYDGLKRQR. An N6-acetyllysine mark is found at lysine 467, lysine 499, and lysine 709.

It belongs to the complex I 75 kDa subunit family. As to quaternary structure, core subunit of respiratory chain NADH dehydrogenase (Complex I) which is composed of 45 different subunits. This is the largest subunit of complex I and it is a component of the iron-sulfur (IP) fragment of the enzyme. Complex I associates with ubiquinol-cytochrome reductase complex (Complex III) to form supercomplexes. Interacts with MDM2 and AKAP1. [2Fe-2S] cluster is required as a cofactor. It depends on [4Fe-4S] cluster as a cofactor.

It is found in the mitochondrion inner membrane. It catalyses the reaction a ubiquinone + NADH + 5 H(+)(in) = a ubiquinol + NAD(+) + 4 H(+)(out). Core subunit of the mitochondrial membrane respiratory chain NADH dehydrogenase (Complex I) which catalyzes electron transfer from NADH through the respiratory chain, using ubiquinone as an electron acceptor. Essential for catalysing the entry and efficient transfer of electrons within complex I. Plays a key role in the assembly and stability of complex I and participates in the association of complex I with ubiquinol-cytochrome reductase complex (Complex III) to form supercomplexes. This Gorilla gorilla gorilla (Western lowland gorilla) protein is NADH-ubiquinone oxidoreductase 75 kDa subunit, mitochondrial (NDUFS1).